A 176-amino-acid polypeptide reads, in one-letter code: Translation initiation factor IF-3 (176 aa).

It belongs to the IF-3 family. Monomer.

It is found in the cytoplasm. Its function is as follows. IF-3 binds to the 30S ribosomal subunit and shifts the equilibrium between 70S ribosomes and their 50S and 30S subunits in favor of the free subunits, thus enhancing the availability of 30S subunits on which protein synthesis initiation begins. The polypeptide is Translation initiation factor IF-3 (Streptococcus agalactiae serotype Ia (strain ATCC 27591 / A909 / CDC SS700)).